A 100-amino-acid polypeptide reads, in one-letter code: Aspartyl/glutamyl-tRNA(Asn/Gln) amidotransferase subunit C (100 aa).

This sequence belongs to the GatC family. Heterotrimer of A, B and C subunits.

It carries out the reaction L-glutamyl-tRNA(Gln) + L-glutamine + ATP + H2O = L-glutaminyl-tRNA(Gln) + L-glutamate + ADP + phosphate + H(+). The catalysed reaction is L-aspartyl-tRNA(Asn) + L-glutamine + ATP + H2O = L-asparaginyl-tRNA(Asn) + L-glutamate + ADP + phosphate + 2 H(+). Functionally, allows the formation of correctly charged Asn-tRNA(Asn) or Gln-tRNA(Gln) through the transamidation of misacylated Asp-tRNA(Asn) or Glu-tRNA(Gln) in organisms which lack either or both of asparaginyl-tRNA or glutaminyl-tRNA synthetases. The reaction takes place in the presence of glutamine and ATP through an activated phospho-Asp-tRNA(Asn) or phospho-Glu-tRNA(Gln). The polypeptide is Aspartyl/glutamyl-tRNA(Asn/Gln) amidotransferase subunit C (Staphylococcus carnosus (strain TM300)).